The primary structure comprises 430 residues: Serine--tRNA ligase (430 aa).

An L-serine-binding site is contributed by 237 to 239 (TAE). Residue 268-270 (RAE) participates in ATP binding. Position 291 (Glu-291) interacts with L-serine. 355–358 (EISS) lines the ATP pocket. Ser-391 lines the L-serine pocket.

The protein belongs to the class-II aminoacyl-tRNA synthetase family. Type-1 seryl-tRNA synthetase subfamily. As to quaternary structure, homodimer. The tRNA molecule binds across the dimer.

The protein localises to the cytoplasm. It catalyses the reaction tRNA(Ser) + L-serine + ATP = L-seryl-tRNA(Ser) + AMP + diphosphate + H(+). It carries out the reaction tRNA(Sec) + L-serine + ATP = L-seryl-tRNA(Sec) + AMP + diphosphate + H(+). The protein operates within aminoacyl-tRNA biosynthesis; selenocysteinyl-tRNA(Sec) biosynthesis; L-seryl-tRNA(Sec) from L-serine and tRNA(Sec): step 1/1. Functionally, catalyzes the attachment of serine to tRNA(Ser). Is also able to aminoacylate tRNA(Sec) with serine, to form the misacylated tRNA L-seryl-tRNA(Sec), which will be further converted into selenocysteinyl-tRNA(Sec). The chain is Serine--tRNA ligase from Serratia proteamaculans (strain 568).